Consider the following 525-residue polypeptide: Hydroxyneurosporene desaturase (525 aa).

Belongs to the carotenoid/retinoid oxidoreductase family.

The catalysed reaction is rhodopin + A = (3E)-3,4-didehydrorhodopin + AH2. It participates in carotenoid biosynthesis; spheroidene biosynthesis. Catalyzes the introduction of C-3,4 double bonds into 1-hydroxyneurosporene (1-HO-Neu) to yield demethylspheroidene (DMS). The preferred substrates are 1-hydroxy-neurosporene, 1-hydroxy-lycopene and 1,1-dihydroxyneurosporene, however the 3,4-didehydrolycopene derivatives such as 1,1-dihydroxy-3,4-didehydrolycopene, 1-methoxy-1-hydroxy-3,4-didehydrolycopene and 1-hydroxy-3,4-didehydrolycopene are also efficiently converted. 1-HO-carotene derivatives can be also used. This Rubrivivax gelatinosus (Rhodocyclus gelatinosus) protein is Hydroxyneurosporene desaturase (crtD).